A 684-amino-acid chain; its full sequence is Hydroxyproline O-galactosyltransferase GALT2 (684 aa).

The Cytoplasmic segment spans residues 1–22; it reads MKRVKSESFRGVYSSRRFKLSH. The chain crosses the membrane as a helical; Signal-anchor for type II membrane protein span at residues 23–43; that stretch reads FLLAIAGFYLVFLAFKFPHFI. Residues 44–684 lie on the Lumenal side of the membrane; that stretch reads EMVAMLSGDT…KGRPQCCNFR (641 aa). The disordered stretch occupies residues 80 to 102; that stretch reads KLEDEDHQSGPSTTQKVSPEEKI. N-linked (GlcNAc...) asparagine glycosylation is found at asparagine 103, asparagine 127, and asparagine 162. One can recognise a Galectin domain in the interval 191–405; the sequence is RIMLLPCGLA…DVDIHSIHAT (215 aa). 2 N-linked (GlcNAc...) asparagine glycosylation sites follow: asparagine 524 and asparagine 632.

It belongs to the glycosyltransferase 31 family. It depends on Mn(2+) as a cofactor. As to expression, expressed in stems and at lower levels in cauline leaves and siliques.

It localises to the golgi apparatus membrane. The protein operates within protein modification; protein glycosylation. Its function is as follows. Possesses hydroxyproline O-galactosyltransferase activity. Transfers galactose from UDP-galactose to hydroxyproline residues in the arabinogalactan proteins (AGPs). Is specific for AGPs containing non-contiguous peptidyl hydroxyproline residues. Utilizes UDP-galactose solely as sugar donor. The addition of galactose onto the peptidyl hydroxyproline residues in AGP core proteins represents the first committed step in arabinogalactan polysaccharide addition. AGP glycans play essential roles in both vegetative and reproductive plant growth. This chain is Hydroxyproline O-galactosyltransferase GALT2, found in Arabidopsis thaliana (Mouse-ear cress).